A 363-amino-acid chain; its full sequence is GDSL esterase/lipase At3g14220 (363 aa).

Positions 1 to 28 (MAKNRNLVFFLGVLASFTLSSFPVTVSG) are cleaved as a signal peptide. Serine 39 (nucleophile) is an active-site residue. Active-site residues include aspartate 318 and histidine 321.

It belongs to the 'GDSL' lipolytic enzyme family.

Its subcellular location is the secreted. In Arabidopsis thaliana (Mouse-ear cress), this protein is GDSL esterase/lipase At3g14220.